Here is a 360-residue protein sequence, read N- to C-terminus: Protein OSB4, chloroplastic (360 aa).

Residues 1–61 constitute a chloroplast transit peptide; that stretch reads MQFLGRSISK…AEKSSEEWPR (61 aa). Residues 28–64 are disordered; sequence SQQFLSTSSTESSSRTRGGGGGNRAEKSSEEWPRPME. The span at 33-43 shows a compositional bias: low complexity; the sequence is STSSTESSSRT. Residues 51-61 are compositionally biased toward basic and acidic residues; it reads RAEKSSEEWPR. The 118-residue stretch at 71-188 folds into the SSB domain; the sequence is IANSIDLIGY…VMVRDLHYIE (118 aa). 2 PDF region regions span residues 224-276 and 296-344; these read WFDL…SELK and WKDL…EKLP.

Its subcellular location is the plastid. It localises to the chloroplast. Functionally, binds single-stranded DNA. The polypeptide is Protein OSB4, chloroplastic (OSB4) (Arabidopsis thaliana (Mouse-ear cress)).